The following is a 329-amino-acid chain: Ribosomal protein L11 methyltransferase (329 aa).

4 residues coordinate S-adenosyl-L-methionine: Thr-177, Gly-198, Asp-220, and Asn-264.

The protein belongs to the methyltransferase superfamily. PrmA family.

Its subcellular location is the cytoplasm. The enzyme catalyses L-lysyl-[protein] + 3 S-adenosyl-L-methionine = N(6),N(6),N(6)-trimethyl-L-lysyl-[protein] + 3 S-adenosyl-L-homocysteine + 3 H(+). In terms of biological role, methylates ribosomal protein L11. This Helicobacter acinonychis (strain Sheeba) protein is Ribosomal protein L11 methyltransferase.